A 247-amino-acid polypeptide reads, in one-letter code: Adenosylcobinamide-GDP ribazoletransferase (247 aa).

The next 6 helical transmembrane spans lie at isoleucine 34–leucine 54, cysteine 59–phenylalanine 79, glycine 113–leucine 133, methionine 138–tyrosine 158, valine 171–threonine 193, and proline 197–leucine 219.

This sequence belongs to the CobS family. Mg(2+) serves as cofactor.

The protein localises to the cell inner membrane. The enzyme catalyses alpha-ribazole + adenosylcob(III)inamide-GDP = adenosylcob(III)alamin + GMP + H(+). It carries out the reaction alpha-ribazole 5'-phosphate + adenosylcob(III)inamide-GDP = adenosylcob(III)alamin 5'-phosphate + GMP + H(+). It functions in the pathway cofactor biosynthesis; adenosylcobalamin biosynthesis; adenosylcobalamin from cob(II)yrinate a,c-diamide: step 7/7. Joins adenosylcobinamide-GDP and alpha-ribazole to generate adenosylcobalamin (Ado-cobalamin). Also synthesizes adenosylcobalamin 5'-phosphate from adenosylcobinamide-GDP and alpha-ribazole 5'-phosphate. The protein is Adenosylcobinamide-GDP ribazoletransferase of Salmonella newport (strain SL254).